A 102-amino-acid polypeptide reads, in one-letter code: Large ribosomal subunit protein bL21 (102 aa).

This sequence belongs to the bacterial ribosomal protein bL21 family. Part of the 50S ribosomal subunit. Contacts protein L20.

This protein binds to 23S rRNA in the presence of protein L20. The polypeptide is Large ribosomal subunit protein bL21 (Geobacter metallireducens (strain ATCC 53774 / DSM 7210 / GS-15)).